The following is a 132-amino-acid chain: Sec-independent protein translocase protein TatB (132 aa).

Residues 2–22 form a helical membrane-spanning segment; the sequence is FDGIGFMELLLIGILGLVVLG. 2 stretches are compositionally biased toward polar residues: residues 86 to 95 and 116 to 132; these read LKQAAQSVNR and IAET…KNNG. Residues 86–132 are disordered; that stretch reads LKQAAQSVNRPYQLDESNEQEPKIAPPQANIAETPTQSGDTHSKNNG.

The protein belongs to the TatB family. As to quaternary structure, the Tat system comprises two distinct complexes: a TatABC complex, containing multiple copies of TatA, TatB and TatC subunits, and a separate TatA complex, containing only TatA subunits. Substrates initially bind to the TatABC complex, which probably triggers association of the separate TatA complex to form the active translocon.

It is found in the cell inner membrane. Functionally, part of the twin-arginine translocation (Tat) system that transports large folded proteins containing a characteristic twin-arginine motif in their signal peptide across membranes. Together with TatC, TatB is part of a receptor directly interacting with Tat signal peptides. TatB may form an oligomeric binding site that transiently accommodates folded Tat precursor proteins before their translocation. The chain is Sec-independent protein translocase protein TatB from Shewanella denitrificans (strain OS217 / ATCC BAA-1090 / DSM 15013).